Consider the following 211-residue polypeptide: LexA repressor (211 aa).

A DNA-binding region (H-T-H motif) is located at residues 35-55 (RAEIANFFGFKSANAAEEHLK). Catalysis depends on for autocatalytic cleavage activity residues serine 128 and lysine 165.

The protein belongs to the peptidase S24 family. As to quaternary structure, homodimer.

It carries out the reaction Hydrolysis of Ala-|-Gly bond in repressor LexA.. Represses a number of genes involved in the response to DNA damage (SOS response), including recA and lexA. In the presence of single-stranded DNA, RecA interacts with LexA causing an autocatalytic cleavage which disrupts the DNA-binding part of LexA, leading to derepression of the SOS regulon and eventually DNA repair. The sequence is that of LexA repressor from Colwellia psychrerythraea (strain 34H / ATCC BAA-681) (Vibrio psychroerythus).